We begin with the raw amino-acid sequence, 316 residues long: MNPNFLDFEQPIADLQAKIEELRLVGDDNALNISDEISRLQDKSHALTASIFGNLTSWQIAQLARHPRRPYTLDYLEHIFTEFEELHGDRHFTDDAAIVGGVARLDDQPVMVIGHQKGRDVREKVRRNFGMPRPEGYRKACRLMEMAERFKLPILTFIDTPGAYPGIDAEERNQSEAIAWNLRVMARLKTPIVSTVIGEGGSGGALAIGVCDRLNMLQYSTYAVISPEGCASILWRTAEKAADAAEAMGITAARLRELGIVDEVIGEPLGGAHRNPAATAESVRQTLLAQLESLRGLDADSLLEQRYERLMSYGRA.

In terms of domain architecture, CoA carboxyltransferase C-terminal spans 39 to 293 (RLQDKSHALT…RQTLLAQLES (255 aa)).

This sequence belongs to the AccA family. In terms of assembly, acetyl-CoA carboxylase is a heterohexamer composed of biotin carboxyl carrier protein (AccB), biotin carboxylase (AccC) and two subunits each of ACCase subunit alpha (AccA) and ACCase subunit beta (AccD).

Its subcellular location is the cytoplasm. The enzyme catalyses N(6)-carboxybiotinyl-L-lysyl-[protein] + acetyl-CoA = N(6)-biotinyl-L-lysyl-[protein] + malonyl-CoA. Its pathway is lipid metabolism; malonyl-CoA biosynthesis; malonyl-CoA from acetyl-CoA: step 1/1. Its function is as follows. Component of the acetyl coenzyme A carboxylase (ACC) complex. First, biotin carboxylase catalyzes the carboxylation of biotin on its carrier protein (BCCP) and then the CO(2) group is transferred by the carboxyltransferase to acetyl-CoA to form malonyl-CoA. The sequence is that of Acetyl-coenzyme A carboxylase carboxyl transferase subunit alpha from Azotobacter vinelandii (strain DJ / ATCC BAA-1303).